Reading from the N-terminus, the 571-residue chain is Streptolysin O (571 aa).

The N-terminal stretch at 1–33 (MSNKKTFKKYSRVAGLLTAALIIGNLVTANAES) is a signal peptide. The disordered stretch occupies residues 30–108 (NAESNKQNTA…KKSEEDHTEE (79 aa)). Residues 37–48 (NTASTETTTTNE) show a composition bias toward low complexity. 2 stretches are compositionally biased toward basic and acidic residues: residues 50–68 (PKPE…KTDD) and 79–108 (APKE…HTEE). 4 beta stranded membrane-spanning segments follow: residues 260 to 273 (KSQI…NSKI), 280 to 289 (IDFKSISKGE), 358 to 367 (SNDVEAAFSA), and 375 to 387 (KTNG…LENS). The short motif at 529–539 (ECTGLAWEWWR) is the Conserved undecapeptide element. The Cholesterol binding motif lies at 561-562 (TL).

Belongs to the cholesterol-dependent cytolysin family. Homooligomeric pore complex of 35 to 50 subunits; when inserted in the host membrane.

It is found in the secreted. Its subcellular location is the host cell membrane. A cholesterol-dependent toxin that causes cytolysis by forming pores in cholesterol containing host membranes. After binding to target membranes, the protein undergoes a major conformation change, leading to its insertion in the host membrane and formation of an oligomeric pore complex. Cholesterol is required for binding to host membranes, membrane insertion and pore formation; cholesterol binding is mediated by a Thr-Leu pair in the C-terminus. Can be reversibly inactivated by oxidation. The polypeptide is Streptolysin O (slo) (Streptococcus pyogenes serotype M3 (strain ATCC BAA-595 / MGAS315)).